A 931-amino-acid polypeptide reads, in one-letter code: Short transient receptor potential channel 6 (931 aa).

The interval 1-24 (MNQSPAAFGPRRGGSPAVVAGAGA) is disordered. Residues 1–406 (MNQSPAAFGP…GLRQQTMAVK (406 aa)) are Cytoplasmic-facing. A compositionally biased stretch (low complexity) spans 13-24 (GGSPAVVAGAGA). ANK repeat units follow at residues 131 to 160 (MGQN…LSRV), 162 to 188 (DALL…FAEG), and 217 to 246 (HDVT…RIER). Residues 407–427 (FLVVLAVAVGLPFLALVYWFA) traverse the membrane as a helical segment. At 428 to 438 (PCSKMGKIMRG) the chain is on the extracellular side. A helical membrane pass occupies residues 439–459 (PFMKFVAHAASFTIFLGLLVM). Residues 460–487 (NAADRFEGTKILPNETSTDHAKQLFRMK) lie on the Cytoplasmic side of the membrane. The chain crosses the membrane as a helical span at residues 488–508 (TSCFSWMEMLIISWVIGMIWA). Residues 509–521 (ECKEIWTQGPKEY) lie on the Extracellular side of the membrane. A helical membrane pass occupies residues 522–542 (LFELWNMLDFGMLAIFAASFI). Residues 543–592 (ARFMAFWHASKAQSIIDANDTLKDLTKVTLGDNVKYYNLARIKWDPSDPQ) lie on the Cytoplasmic side of the membrane. A helical transmembrane segment spans residues 593-613 (IISEGLYAIAVVLSFSRIAYI). At 614–636 (LPANESFGPLQISLGRTVKDIFK) the chain is on the extracellular side. A glycan (N-linked (GlcNAc...) asparagine) is linked at asparagine 617. Residues 618-647 (ESFGPLQISLGRTVKDIFKFMVIFIMVFVA) form an ANK 4 repeat. The helical transmembrane segment at 637-657 (FMVIFIMVFVAFMIGMFNLYS) threads the bilayer. The Cytoplasmic segment spans residues 658–674 (YYIGAKQNEAFTTVEES). A helical membrane pass occupies residues 675 to 695 (FKTLFWAIFGLSEVKSVVINY). Over 696–706 (NHKFIENIGYV) the chain is Extracellular. Residues 707–727 (LYGVYNVTMVIVLLNMLIAMI) form a helical membrane-spanning segment. Residues 728-931 (NSSFQEIEDD…MEPNQEESNR (204 aa)) are Cytoplasmic-facing. Serine 815 is modified (phosphoserine).

This sequence belongs to the transient receptor (TC 1.A.4) family. STrpC subfamily. TRPC6 sub-subfamily. In terms of assembly, homodimer; forms channel complex. Interacts with MX1 and RNF24. Phosphorylated by FYN, leading to an increase of TRPC6 channel activity.

It is found in the cell membrane. The catalysed reaction is Ca(2+)(in) = Ca(2+)(out). Thought to form a receptor-activated non-selective calcium permeant cation channel. Probably is operated by a phosphatidylinositol second messenger system activated by receptor tyrosine kinases or G-protein coupled receptors. Activated by diacylglycerol (DAG) in a membrane-delimited fashion, independently of protein kinase C. Seems not to be activated by intracellular calcium store depletion. This is Short transient receptor potential channel 6 from Bos taurus (Bovine).